We begin with the raw amino-acid sequence, 139 residues long: ATP synthase epsilon chain (139 aa).

It belongs to the ATPase epsilon chain family. As to quaternary structure, F-type ATPases have 2 components, CF(1) - the catalytic core - and CF(0) - the membrane proton channel. CF(1) has five subunits: alpha(3), beta(3), gamma(1), delta(1), epsilon(1). CF(0) has three main subunits: a, b and c.

The protein resides in the cell inner membrane. Its function is as follows. Produces ATP from ADP in the presence of a proton gradient across the membrane. This is ATP synthase epsilon chain from Pseudomonas entomophila (strain L48).